The chain runs to 193 residues: ATP-dependent Clp protease proteolytic subunit 2 (193 aa).

Residue serine 98 is the Nucleophile of the active site. Residue histidine 123 is part of the active site.

Belongs to the peptidase S14 family. As to quaternary structure, fourteen ClpP subunits assemble into 2 heptameric rings which stack back to back to give a disk-like structure with a central cavity, resembling the structure of eukaryotic proteasomes.

Its subcellular location is the cytoplasm. The catalysed reaction is Hydrolysis of proteins to small peptides in the presence of ATP and magnesium. alpha-casein is the usual test substrate. In the absence of ATP, only oligopeptides shorter than five residues are hydrolyzed (such as succinyl-Leu-Tyr-|-NHMec, and Leu-Tyr-Leu-|-Tyr-Trp, in which cleavage of the -Tyr-|-Leu- and -Tyr-|-Trp bonds also occurs).. Cleaves peptides in various proteins in a process that requires ATP hydrolysis. Has a chymotrypsin-like activity. Plays a major role in the degradation of misfolded proteins. This Bacillus cereus (strain ATCC 10987 / NRS 248) protein is ATP-dependent Clp protease proteolytic subunit 2.